Consider the following 409-residue polypeptide: uncharacterized protein (409 aa).

This is an uncharacterized protein from Mycoplasma genitalium (strain ATCC 33530 / DSM 19775 / NCTC 10195 / G37) (Mycoplasmoides genitalium).